Here is a 1016-residue protein sequence, read N- to C-terminus: Mediator of RNA polymerase II transcription subunit 5 (1016 aa).

Belongs to the Mediator complex subunit 5 family. Component of the Mediator complex.

The protein resides in the nucleus. Component of the Mediator complex, a coactivator involved in the regulated transcription of nearly all RNA polymerase II-dependent genes. Mediator functions as a bridge to convey information from gene-specific regulatory proteins to the basal RNA polymerase II transcription machinery. Mediator is recruited to promoters by direct interactions with regulatory proteins and serves as a scaffold for the assembly of a functional preinitiation complex with RNA polymerase II and the general transcription factors. This chain is Mediator of RNA polymerase II transcription subunit 5 (nut1), found in Aspergillus terreus (strain NIH 2624 / FGSC A1156).